The sequence spans 1012 residues: MTNLQDQTQQIVPFIRSLLMPTTGPASIPDDTLEKHTLRSETSTYNLTVGDTGSGLIVFFPGFPGSIVGAHYTLQSNGNLKFDQMLLTAQNLPASYNYCRLVSRSLTVRSSTLPGGVYALNGTINAVTFQGSLSELTDVSYNGLMSATANINDKIGNVLVGEGVTVLSLPTSYDLGYVRLGDPIPAIGLDPKMVATCDSSDRPRVYTITAADDYQFSSQYQPGGVTITLFSANIDAITSLSVGGELVFQTSVQGLVLGATIYFIGFDGTTVITRAVAADNGLTAGTDNLMPFNLVIPTNEITQPITSIKLEVVTSKSGGQAGDQMSWSASGSLAVTIHGGNYPGALRPVTLVAYERVATGSVVTVAGVSNFELIPNPELAKNLVTEYGRFDPGAMNYTKLILSERDRLGIKTVWPTREYTDFREYFMEVADLNSPLKIAGAFGFKDIIRAIRRIAVPVVSTLFPPAAPLAHAIGEGVDYLLGDEAQAASGTARAASGKARAASGRIRQLTLAADKGYEVVANLFQVPQNPVVDGILASPGVLRGAHNLDCVLREGATLFPVVITTVEDAMTPKALNSKIFAVIEGVREDLQPPSQRGSFIRTLSGHRVYGYAPDGVLPLETGRDYTVVPIDDVWDDSIMLSKDPIPPIVGNSGNLAIAYMDVFRPKVPIHVAMTGALNAFGEIEKVSFRSTKLATAHRLGLKLAGPGAFDVNTGPNWATFIKRFPHNPRDWDRLPYLNLPYLPPNAGRQYHLAMAASEFKETPELESAVRAMEAAANVDPLFQSALSVFMWLEENGIVTDMANFALSDPNAHRMRNFLANAPQAGSKSQRAKYGTAGYGVEARGPTPEEAQRAKDTRISKKMETMGIYFATPEWVALNGHRGPSPAQLKYWQNTREIPDPNEDYLDYVHAEKSRLASEEQILKAATSIYGAPGQAEPPQAFIDEVAKVYEINHGRGPNQEQMKDLLLTAMELKHRNPRRAPPKPKPKPNAPTQRPPGRLGRWIRTVSDEDLE.

Asp30 is an a divalent metal cation binding site. Positions 513 to 755 (ADKGYEVVAN…AGRQYHLAMA (243 aa)) constitute a Peptidase S50 domain. Ser652 (nucleophile) is an active-site residue. Lys692 is a catalytic residue. Positions 969–1012 (AMELKHRNPRRAPPKPKPKPNAPTQRPPGRLGRWIRTVSDEDLE) are disordered. Over residues 975 to 986 (RNPRRAPPKPKP) the composition is skewed to basic residues. The tract at residues 1003 to 1012 (IRTVSDEDLE) is interaction with VP1 protein.

Homotrimer. A central divalent metal stabilizes the VP2 trimer. Interacts with host ITGA4/ITGB1. In terms of assembly, homodimer. Interacts (via C-terminus) with VP1 in the cytoplasm. Interacts with VP2. Post-translationally, specific enzymatic cleavages yield mature proteins. The capsid assembly seems to be regulated by polyprotein processing. The protease VP4 cleaves itself off the polyprotein, thus releasing pre-VP2 and VP3 within the infected cell. During capsid assembly, the C-terminus of pre-VP2 is further processed by VP4, giving rise to VP2, the external capsid protein and three small peptides that all stay closely associated with the capsid.

Its subcellular location is the virion. It localises to the host cytoplasm. Functionally, capsid protein VP2 self assembles to form an icosahedral capsid with a T=13 symmetry, about 70 nm in diameter, and consisting of 260 VP2 trimers. The capsid encapsulates the genomic dsRNA. VP2 is also involved in attachment and entry into the host cell by interacting with host ITGA4/ITGB1. Its function is as follows. The precursor of VP2 plays an important role in capsid assembly. First, pre-VP2 and VP2 oligomers assemble to form a procapsid. Then, the pre-VP2 intermediates may be processed into VP2 proteins by proteolytic cleavage mediated by VP4 to obtain the mature virion. The final capsid is composed of pentamers and hexamers but VP2 has a natural tendency to assemble into all-pentameric structures. Therefore pre-VP2 may be required to allow formation of the hexameric structures. Protease VP4 is a serine protease that cleaves the polyprotein into its final products. Pre-VP2 is first partially cleaved, and may be completely processed by VP4 upon capsid maturation. In terms of biological role, capsid protein VP3 plays a key role in virion assembly by providing a scaffold for the capsid made of VP2. May self-assemble to form a T=4-like icosahedral inner-capsid composed of at least 180 trimers. Plays a role in genomic RNA packaging by recruiting VP1 into the capsid and interacting with the dsRNA genome segments to form a ribonucleoprotein complex. Additionally, the interaction of the VP3 C-terminal tail with VP1 removes the inherent structural blockade of the polymerase active site. Thus, VP3 can also function as a transcriptional activator. Functionally, structural peptide 1 is a small peptide derived from pre-VP2 C-terminus. It destabilizes and perforates cell membranes, suggesting a role during entry. Its function is as follows. Structural peptide 2 is a small peptide derived from pVP2 C-terminus. It is not essential for the virus viability, but viral growth is affected when missing. Structural peptide 3 is a small peptide derived from pVP2 C-terminus. It is not essential for the virus viability, but viral growth is affected when missing. In terms of biological role, structural peptide 4 is a small peptide derived from pVP2 C-terminus. It is essential for the virus viability. The sequence is that of Structural polyprotein from Avian infectious bursal disease virus (strain STC) (IBDV).